The sequence spans 686 residues: Translation initiation factor IF-2 (686 aa).

Positions 54–105 (KPSVADEFEVEEKVVRSKKNSNKKKKKGKGNEDKRQENFAGRQQTQTVETPD) are disordered. Basic residues predominate over residues 69-81 (RSKKNSNKKKKKG). The 170-residue stretch at 188–357 (ERPAVVTIMG…LLISEVEEYK (170 aa)) folds into the tr-type G domain. Positions 197–204 (GHVDHGKT) are G1. 197-204 (GHVDHGKT) is a binding site for GTP. Positions 222 to 226 (GITQH) are G2. Residues 243–246 (DTPG) are G3. GTP contacts are provided by residues 243–247 (DTPGH) and 297–300 (NKMD). A G4 region spans residues 297–300 (NKMD). The tract at residues 333–335 (SAI) is G5.

The protein belongs to the TRAFAC class translation factor GTPase superfamily. Classic translation factor GTPase family. IF-2 subfamily.

The protein resides in the cytoplasm. One of the essential components for the initiation of protein synthesis. Protects formylmethionyl-tRNA from spontaneous hydrolysis and promotes its binding to the 30S ribosomal subunits. Also involved in the hydrolysis of GTP during the formation of the 70S ribosomal complex. In Bacillus anthracis (strain A0248), this protein is Translation initiation factor IF-2.